The following is a 388-amino-acid chain: MNLHEYQAKALFAEYGLPVSEGFACDTPQEAVEAAGRIGGDMWVVKCQVHAGGRGKAGGVKVTGSKDEIRAFAEHWLGKNLVTYQTDEKGQPVAKILVESCTDIANELYLGAVVDRSTRRVVFMASTEGGVEIETVAEETPELIHKAIIDPLTGPQPYQARDLGFKLGLNPTQMKQFTKVFMGLAKMFEDHDFALLEINPLVITDEGNIHCLDGKIGIDGNALFRQEKIRDMHDPSQDDAREAHAAKFELNYVALDGNVGCMVNGAGLAMGTMDIVNLHGGKPANFLDVGGGATKERVAEAFKIILSDDNVKAVLVNIFGGIVRCDMIAEGIIGAVKEVGVTVPVVVRLEGTNADLGRDVLASSDLDIIAATSLTDAAEQVVKAAEGK.

The ATP-grasp domain maps to 9–244; sequence KALFAEYGLP…PSQDDAREAH (236 aa). ATP-binding positions include K46, 53-55, E99, T102, and E107; that span reads GRG. Mg(2+)-binding residues include N199 and D213. Residues N264 and 321-323 contribute to the substrate site; that span reads GIV.

The protein belongs to the succinate/malate CoA ligase beta subunit family. In terms of assembly, heterotetramer of two alpha and two beta subunits. Mg(2+) serves as cofactor.

The enzyme catalyses succinate + ATP + CoA = succinyl-CoA + ADP + phosphate. It catalyses the reaction GTP + succinate + CoA = succinyl-CoA + GDP + phosphate. It functions in the pathway carbohydrate metabolism; tricarboxylic acid cycle; succinate from succinyl-CoA (ligase route): step 1/1. Its function is as follows. Succinyl-CoA synthetase functions in the citric acid cycle (TCA), coupling the hydrolysis of succinyl-CoA to the synthesis of either ATP or GTP and thus represents the only step of substrate-level phosphorylation in the TCA. The beta subunit provides nucleotide specificity of the enzyme and binds the substrate succinate, while the binding sites for coenzyme A and phosphate are found in the alpha subunit. This is Succinate--CoA ligase [ADP-forming] subunit beta from Shewanella sediminis (strain HAW-EB3).